A 173-amino-acid chain; its full sequence is Superoxide dismutase [Cu-Zn] (173 aa).

Positions methionine 1–alanine 19 are cleaved as a signal peptide. Residues histidine 67, histidine 69, and histidine 92 each contribute to the Cu cation site. A disordered region spans residues glycine 72–leucine 113. Cysteine 74 and cysteine 169 are disulfide-bonded. Residues histidine 92, histidine 101, histidine 109, and aspartate 112 each contribute to the Zn(2+) site. Histidine 147 provides a ligand contact to Cu cation.

Belongs to the Cu-Zn superoxide dismutase family. In terms of assembly, monomer. It depends on Cu cation as a cofactor. Requires Zn(2+) as cofactor.

Its subcellular location is the periplasm. The enzyme catalyses 2 superoxide + 2 H(+) = H2O2 + O2. In terms of biological role, destroys radicals which are normally produced within the cells and which are toxic to biological systems. This Escherichia coli O157:H7 protein is Superoxide dismutase [Cu-Zn] (sodC).